The primary structure comprises 245 residues: 14-3-3 protein zeta/delta (245 aa).

The residue at position 1 (M1) is an N-acetylmethionine. K3 carries the N6-acetyllysine modification. A Phosphoserine; by PKA modification is found at S58. Position 68 is an N6-acetyllysine (K68). S184, S207, and S210 each carry phosphoserine. T232 is modified (phosphothreonine; by CK1).

The protein belongs to the 14-3-3 family. Interacts with CDK16 and BSPRY. Interacts with WEE1 (C-terminal). Interacts with SAMSN1. Interacts with MLF1 (phosphorylated form); the interaction retains it in the cytoplasm. Interacts with Thr-phosphorylated ITGB2. Interacts with BCL2L11. Homodimer. Heterodimerizes with YWHAE. Homo- and heterodimerization is inhibited by phosphorylation on Ser-58. Interacts with FOXO4, NOXA1, SSH1 and ARHGEF2. Interacts with Pseudomonas aeruginosa exoS (unphosphorylated form). Interacts with BAX; the interaction occurs in the cytoplasm. Under stress conditions, MAPK8-mediated phosphorylation releases BAX to mitochondria. Interacts with phosphorylated RAF1; the interaction is inhibited when YWHAZ is phosphorylated on Thr-232. Interacts with TP53; the interaction enhances p53 transcriptional activity. The Ser-58 phosphorylated form inhibits this interaction and p53 transcriptional activity. Interacts with ABL1 (phosphorylated form); the interaction retains ABL1 in the cytoplasm. Interacts with PKA-phosphorylated AANAT; the interaction modulates AANAT enzymatic activity by increasing affinity for arylalkylamines and acetyl-CoA and protecting the enzyme from dephosphorylation and proteasomal degradation. It may also prevent thiol-dependent inactivation. Interacts with AKT1; the interaction phosphorylates YWHAZ and modulates dimerization. Interacts with GAB2 and TLK2. Interacts with the 'Thr-369' phosphorylated form of DAPK2. Interacts with PI4KB, TBC1D22A and TBC1D22B. Interacts with ZFP36L1 (via phosphorylated form); this interaction occurs in a p38 MAPK- and AKT-signaling pathways. Interacts with SLITRK1. Interacts with AK5, LDB1, MADD, MARK3, PDE1A and SMARCB1. Interacts with YWHAZ. Interacts with MEFV. Interacts with ADAM22 (via C-terminus). In terms of processing, the delta, brain-specific form differs from the zeta form in being phosphorylated. Phosphorylation on Ser-184 by MAPK8; promotes dissociation of BAX and translocation of BAX to mitochondria. Phosphorylation on Thr-232; inhibits binding of RAF1. Phosphorylated on Ser-58 by PKA and protein kinase C delta type catalytic subunit in a sphingosine-dependent fashion. Phosphorylation on Ser-58 by PKA; disrupts homodimerization and heterodimerization with YHAE and TP53. Highly expressed in brain (at protein level).

The protein resides in the cytoplasm. Its subcellular location is the melanosome. In terms of biological role, adapter protein implicated in the regulation of a large spectrum of both general and specialized signaling pathways. Binds to a large number of partners, usually by recognition of a phosphoserine or phosphothreonine motif. Binding generally results in the modulation of the activity of the binding partner. Promotes cytosolic retention and inactivation of TFEB transcription factor by binding to phosphorylated TFEB. Induces ARHGEF7 activity on RAC1 as well as lamellipodia and membrane ruffle formation. In neurons, regulates spine maturation through the modulation of ARHGEF7 activity. The sequence is that of 14-3-3 protein zeta/delta (YWHAZ) from Ovis aries (Sheep).